The following is a 421-amino-acid chain: NAD-specific glutamate dehydrogenase (421 aa).

Residues lysine 71 and lysine 95 each coordinate substrate. Lysine 107 acts as the Proton donor in catalysis. NAD(+) contacts are provided by threonine 191 and asparagine 222. Position 355 (serine 355) interacts with substrate.

It belongs to the Glu/Leu/Phe/Val dehydrogenases family. As to quaternary structure, homohexamer.

The enzyme catalyses L-glutamate + NAD(+) + H2O = 2-oxoglutarate + NH4(+) + NADH + H(+). This chain is NAD-specific glutamate dehydrogenase (gluD), found in Clostridioides difficile (Peptoclostridium difficile).